Consider the following 332-residue polypeptide: Mitotic spindle assembly checkpoint protein MAD2B (332 aa).

An HORMA domain is found at 4–332; the sequence is EHFCDCIGEF…RTFTEQSITK (329 aa). 2 disordered regions span residues 181–204 and 225–244; these read KTQQSSSSSSSLKTSGGGDGNGFI and KSNQKNKKEDNDDNNNGDKD. A compositionally biased stretch (basic and acidic residues) spans 230 to 244; that stretch reads NKKEDNDDNNNGDKD.

This sequence belongs to the MAD2 family.

The protein localises to the nucleus. Adapter protein able to interact with different proteins and involved in different biological processes. This is Mitotic spindle assembly checkpoint protein MAD2B (mad2l2) from Dictyostelium discoideum (Social amoeba).